The chain runs to 108 residues: Large ribosomal subunit protein bL31B (108 aa).

The disordered stretch occupies residues 88-108 (AAVEEAPAVKSKKKAPIKKKK). The segment covering 97 to 108 (KSKKKAPIKKKK) has biased composition (basic residues).

It belongs to the bacterial ribosomal protein bL31 family. Type B subfamily. In terms of assembly, part of the 50S ribosomal subunit.

This Chlamydia abortus (strain DSM 27085 / S26/3) (Chlamydophila abortus) protein is Large ribosomal subunit protein bL31B.